The primary structure comprises 392 residues: Fasciculation and elongation protein zeta-1 (392 aa).

Positions 1 to 36 (MEAPLVSLDEEFEDIRPSCTEEPEEKPQCLYGTSPH) are disordered. Phosphoserine is present on Ser58. Residues 175–196 (MQNSPDPEEEEEVLEEEDGGEI) are disordered. Residues 180–194 (DPEEEEEVLEEEDGG) are compositionally biased toward acidic residues. The stretch at 230–298 (SELTELLDRV…KKRRKEKGLS (69 aa)) forms a coiled coil. Ser298 and Ser316 each carry phosphoserine.

The protein belongs to the zygin family. As to quaternary structure, homodimer. Interacts with the NH2-terminal variable region (V1) of PKC zeta and weakly with that of PKC epsilon. Interacts with UBE4B and SAP30L. Interacts with SCOC and ULK1; SCOC interferes with ULK1-binding to FEZ1. Directly interacts with SCOC and UVRAG. Stabilizes the interaction between SCOC and UVRAG during amino acid starvation. In terms of processing, phosphorylated by protein kinase C zeta; which enhances interaction with UBE4B and polyubiquitination. Post-translationally, polyubiquitinated in a UBE4B-dependent manner; which does not lead to proteasomal degradation and may be important for neurogenic activity. Polyubiquitin linkage seems to be mainly through Lys-26.

The protein localises to the cytoplasm. It is found in the cytoskeleton. The protein resides in the microtubule organizing center. Its subcellular location is the centrosome. It localises to the cell membrane. Its function is as follows. May be involved in axonal outgrowth as component of the network of molecules that regulate cellular morphology and axon guidance machinery. May participate in the transport of mitochondria and other cargos along microtubules. This chain is Fasciculation and elongation protein zeta-1 (Fez1), found in Mus musculus (Mouse).